A 106-amino-acid chain; its full sequence is MNKIRKGDQIIVLTGRDKGKQGVVSARKDDSHLLIDGINMVKKHVKPNPMKGTTGGIVEKAMPIHQSNVAIFNAATGKADRVGIKVQADGTRVRVFKSSGAEIKAA.

Belongs to the universal ribosomal protein uL24 family. In terms of assembly, part of the 50S ribosomal subunit.

One of two assembly initiator proteins, it binds directly to the 5'-end of the 23S rRNA, where it nucleates assembly of the 50S subunit. In terms of biological role, one of the proteins that surrounds the polypeptide exit tunnel on the outside of the subunit. This chain is Large ribosomal subunit protein uL24, found in Delftia acidovorans (strain DSM 14801 / SPH-1).